A 139-amino-acid chain; its full sequence is Putative pre-16S rRNA nuclease (139 aa).

It belongs to the YqgF nuclease family.

The protein localises to the cytoplasm. Could be a nuclease involved in processing of the 5'-end of pre-16S rRNA. This chain is Putative pre-16S rRNA nuclease, found in Phocaeicola vulgatus (strain ATCC 8482 / DSM 1447 / JCM 5826 / CCUG 4940 / NBRC 14291 / NCTC 11154) (Bacteroides vulgatus).